Reading from the N-terminus, the 1488-residue chain is Chromosome partition protein MukB (1488 aa).

Position 34–41 (Gly-34–Ser-41) interacts with ATP. 3 coiled-coil regions span residues Leu-326–Gln-418, Leu-444–His-472, and Arg-509–Pro-602. Residues Pro-666 to Arg-783 are flexible hinge. 3 coiled-coil regions span residues Glu-835–Glu-923, Glu-977–Gly-1116, and Val-1209–Val-1265.

This sequence belongs to the SMC family. MukB subfamily. As to quaternary structure, homodimerization via its hinge domain. Binds to DNA via its C-terminal region. Interacts, and probably forms a ternary complex, with MukE and MukF via its C-terminal region. The complex formation is stimulated by calcium or magnesium. Interacts with tubulin-related protein FtsZ.

The protein localises to the cytoplasm. It localises to the nucleoid. Plays a central role in chromosome condensation, segregation and cell cycle progression. Functions as a homodimer, which is essential for chromosome partition. Involved in negative DNA supercoiling in vivo, and by this means organize and compact chromosomes. May achieve or facilitate chromosome segregation by condensation DNA from both sides of a centrally located replisome during cell division. This Salmonella paratyphi B (strain ATCC BAA-1250 / SPB7) protein is Chromosome partition protein MukB.